Consider the following 131-residue polypeptide: Small ribosomal subunit protein uS8c (131 aa).

This sequence belongs to the universal ribosomal protein uS8 family. In terms of assembly, part of the 30S ribosomal subunit.

The protein resides in the plastid. It is found in the chloroplast. One of the primary rRNA binding proteins, it binds directly to 16S rRNA central domain where it helps coordinate assembly of the platform of the 30S subunit. In Phalaenopsis aphrodite subsp. formosana (Moth orchid), this protein is Small ribosomal subunit protein uS8c (rps8).